The following is a 273-amino-acid chain: Large ribosomal subunit protein uL2 (273 aa).

Disordered stretches follow at residues 31–50 (APLL…GRIT) and 221–273 (RGTA…RRGK). The segment covering 253–273 (KGKKTRHNKRTDKYIVRRRGK) has biased composition (basic residues).

Belongs to the universal ribosomal protein uL2 family. In terms of assembly, part of the 50S ribosomal subunit. Forms a bridge to the 30S subunit in the 70S ribosome.

In terms of biological role, one of the primary rRNA binding proteins. Required for association of the 30S and 50S subunits to form the 70S ribosome, for tRNA binding and peptide bond formation. It has been suggested to have peptidyltransferase activity; this is somewhat controversial. Makes several contacts with the 16S rRNA in the 70S ribosome. The sequence is that of Large ribosomal subunit protein uL2 from Actinobacillus pleuropneumoniae serotype 7 (strain AP76).